A 556-amino-acid chain; its full sequence is 2-isopropylmalate synthase (556 aa).

The Pyruvate carboxyltransferase domain maps to 33 to 307 (PIWCSSDLRD…NPGLDFSDID (275 aa)). 4 residues coordinate Mg(2+): Asp-42, His-246, His-248, and Asn-282. Residues 439–556 (ANVPYALISH…SLSQTQAKAA (118 aa)) are regulatory domain.

The protein belongs to the alpha-IPM synthase/homocitrate synthase family. LeuA type 2 subfamily. As to quaternary structure, homodimer. The cofactor is Mg(2+).

It localises to the cytoplasm. It carries out the reaction 3-methyl-2-oxobutanoate + acetyl-CoA + H2O = (2S)-2-isopropylmalate + CoA + H(+). Its pathway is amino-acid biosynthesis; L-leucine biosynthesis; L-leucine from 3-methyl-2-oxobutanoate: step 1/4. Catalyzes the condensation of the acetyl group of acetyl-CoA with 3-methyl-2-oxobutanoate (2-ketoisovalerate) to form 3-carboxy-3-hydroxy-4-methylpentanoate (2-isopropylmalate). This Pseudomonas syringae pv. syringae (strain B728a) protein is 2-isopropylmalate synthase.